The primary structure comprises 248 residues: Adenosylcobinamide-GDP ribazoletransferase (248 aa).

The next 7 helical transmembrane spans lie at phenylalanine 32–valine 52, alanine 60–alanine 80, alanine 103–leucine 123, tryptophan 134–threonine 154, alanine 170–methionine 190, leucine 195–alanine 215, and leucine 227–phenylalanine 247.

This sequence belongs to the CobS family. The cofactor is Mg(2+).

It localises to the cell inner membrane. It carries out the reaction alpha-ribazole + adenosylcob(III)inamide-GDP = adenosylcob(III)alamin + GMP + H(+). The enzyme catalyses alpha-ribazole 5'-phosphate + adenosylcob(III)inamide-GDP = adenosylcob(III)alamin 5'-phosphate + GMP + H(+). The protein operates within cofactor biosynthesis; adenosylcobalamin biosynthesis; adenosylcobalamin from cob(II)yrinate a,c-diamide: step 7/7. Functionally, joins adenosylcobinamide-GDP and alpha-ribazole to generate adenosylcobalamin (Ado-cobalamin). Also synthesizes adenosylcobalamin 5'-phosphate from adenosylcobinamide-GDP and alpha-ribazole 5'-phosphate. This is Adenosylcobinamide-GDP ribazoletransferase from Prosthecochloris aestuarii (strain DSM 271 / SK 413).